A 248-amino-acid chain; its full sequence is Ribonuclease HII (248 aa).

The RNase H type-2 domain occupies 29 to 219 (DIVCGVDEAG…VREAHLRLGT (191 aa)). Residues Asp35, Glu36, and Asp128 each contribute to the a divalent metal cation site.

It belongs to the RNase HII family. Requires Mn(2+) as cofactor. Mg(2+) is required as a cofactor.

Its subcellular location is the cytoplasm. It carries out the reaction Endonucleolytic cleavage to 5'-phosphomonoester.. Functionally, endonuclease that specifically degrades the RNA of RNA-DNA hybrids. In Paraburkholderia xenovorans (strain LB400), this protein is Ribonuclease HII.